A 31-amino-acid chain; its full sequence is Photosystem I reaction center subunit XII (31 aa).

Residues 7–26 (QIFIALLTALIPAFFALKLG) traverse the membrane as a helical segment.

It belongs to the PsaM family.

It localises to the plastid. It is found in the chloroplast thylakoid membrane. In Euglena granulata, this protein is Photosystem I reaction center subunit XII.